The sequence spans 388 residues: Leucine aminopeptidase 1 (388 aa).

An N-terminal signal peptide occupies residues 1 to 19; sequence MRSSVLFSLYAATLVAAVA. Residues 20 to 88 constitute a propeptide that is removed on maturation; the sequence is HPKDPQIVLQ…TLNHKLSTES (69 aa). Asparagine 98 carries an N-linked (GlcNAc...) asparagine glycan. Residues histidine 187, aspartate 206, glutamate 245, and aspartate 272 each coordinate Zn(2+). Residues cysteine 321 and cysteine 325 are joined by a disulfide bond. Residue histidine 354 coordinates Zn(2+).

Belongs to the peptidase M28 family. M28E subfamily. In terms of assembly, monomer. Zn(2+) is required as a cofactor.

Its subcellular location is the secreted. In terms of biological role, extracellular aminopeptidase that allows assimilation of proteinaceous substrates. This is Leucine aminopeptidase 1 (LAP1) from Leptosphaeria maculans (strain JN3 / isolate v23.1.3 / race Av1-4-5-6-7-8) (Blackleg fungus).